The chain runs to 25 residues: Ocellatin-P1 (25 aa).

A Leucine amide modification is found at leucine 25.

Expressed by the skin glands.

Its subcellular location is the secreted. Its function is as follows. Antibacterial peptide that inhibits reference strains of both Gram-negative bacteria (E.coli, E.cloacae, K.pneumoniae, P.aeruginosa) and Gram-positive bacteria (S.aureus, S.epidermidis, E.faecalis, Streptococcus group B) with relatively low potencies (MIC=25-200 uM). The peptide shows very low hemolytic activity against human erythrocytes. Wheel projection demonstrates the amphipathicity of the alpha-helices is low which may explain the low antibacterial potency. This is Ocellatin-P1 from Leptodactylus pentadactylus (Smokey jungle frog).